The following is a 238-amino-acid chain: Probable transcriptional regulatory protein CTA_0499 (238 aa).

The disordered stretch occupies residues 1–21 (MAGHSKWANTKHRKERADHKK). Over residues 9–21 (NTKHRKERADHKK) the composition is skewed to basic residues.

The protein belongs to the TACO1 family.

Its subcellular location is the cytoplasm. The chain is Probable transcriptional regulatory protein CTA_0499 from Chlamydia trachomatis serovar A (strain ATCC VR-571B / DSM 19440 / HAR-13).